The following is a 303-amino-acid chain: Sulfotransferase 6B1 (303 aa).

65–70 (KCGSNW) serves as a coordination point for 3'-phosphoadenylyl sulfate. Residue histidine 118 is the Proton acceptor of the active site. 3'-phosphoadenylyl sulfate contacts are provided by residues arginine 140, serine 148, tyrosine 203, 237–242 (STFQAM), and 259–261 (RKG).

The protein belongs to the sulfotransferase 1 family.

Its subcellular location is the cytoplasm. The protein resides in the cytosol. It catalyses the reaction thyroxine + 3'-phosphoadenylyl sulfate = thyroxine sulfate + adenosine 3',5'-bisphosphate + H(+). In terms of biological role, sulfotransferase that utilizes 3'-phospho-5'-adenylyl sulfate (PAPS) as sulfonate donor to catalyze the sulfate conjugation of thyroxine. Involved in the metabolism of thyroxine. The chain is Sulfotransferase 6B1 (SULT6B1) from Pan troglodytes (Chimpanzee).